The sequence spans 218 residues: Large ribosomal subunit protein uL3 (218 aa).

This sequence belongs to the universal ribosomal protein uL3 family. In terms of assembly, part of the 50S ribosomal subunit. Forms a cluster with proteins L14 and L19.

One of the primary rRNA binding proteins, it binds directly near the 3'-end of the 23S rRNA, where it nucleates assembly of the 50S subunit. The sequence is that of Large ribosomal subunit protein uL3 from Corynebacterium glutamicum (strain R).